The sequence spans 137 residues: Small ribosomal subunit protein uS9 (137 aa).

The protein belongs to the universal ribosomal protein uS9 family.

The polypeptide is Small ribosomal subunit protein uS9 (rps9) (Saccharolobus solfataricus (strain ATCC 35092 / DSM 1617 / JCM 11322 / P2) (Sulfolobus solfataricus)).